A 766-amino-acid polypeptide reads, in one-letter code: Alpha-onocerin synthase LCD (766 aa).

PFTB repeat units follow at residues 101–143 (LCRA…GALD), 151–192 (QREI…RLMG), 456–507 (QESY…STTD), 517–558 (IHEC…PGYK), 594–634 (IQEG…LASG), 643–684 (IQRA…HVVH), and 705–752 (LHRA…WALG). Asp-488 (proton donor) is an active-site residue.

The protein belongs to the terpene cyclase/mutase family.

The catalysed reaction is pre-alpha-onocerin = alpha-onocerin. It functions in the pathway secondary metabolite biosynthesis; terpenoid biosynthesis. In terms of biological role, oxidosqualene cyclase involved in the biosynthesis of alpha-onocerin, a triterpenoid characterized by a symmetrical structure due to cyclizations at both termini of dioxidosqualene that inhibits acetylcholinesterase. Catalyzes the second half of the cyclization, exclusively from pre-alpha-onocerin. The chain is Alpha-onocerin synthase LCD from Lycopodium clavatum (Stag's-horn clubmoss).